The sequence spans 330 residues: G-protein coupled receptor 74 (330 aa).

Transmembrane regions (helical) follow at residues 50–70 (LIVV…NLWL), 85–105 (FILI…IFSI), 121–141 (MVVF…LCFD), 160–180 (WVFC…QKAL), 210–230 (VAVS…CIFY), 252–272 (MLLF…LSFI), and 295–315 (LPLL…IYIL). Cys-117 and Cys-195 are oxidised to a cystine.

This sequence belongs to the G-protein coupled receptor 1 family.

It localises to the host membrane. This is G-protein coupled receptor 74 (74) from Equus caballus (Horse).